A 102-amino-acid chain; its full sequence is Ribonuclease P protein component 1 (102 aa).

Belongs to the eukaryotic/archaeal RNase P protein component 1 family. As to quaternary structure, consists of a catalytic RNA component and at least 4-5 protein subunits.

Its subcellular location is the cytoplasm. The enzyme catalyses Endonucleolytic cleavage of RNA, removing 5'-extranucleotides from tRNA precursor.. Its function is as follows. Part of ribonuclease P, a protein complex that generates mature tRNA molecules by cleaving their 5'-ends. In Archaeoglobus fulgidus (strain ATCC 49558 / DSM 4304 / JCM 9628 / NBRC 100126 / VC-16), this protein is Ribonuclease P protein component 1.